The following is a 430-amino-acid chain: Hemagglutinin-esterase (430 aa).

The N-terminal stretch at 1-27 (MLRMRVRPPSAIPVFLIFVLLPFVLTS) is a signal peptide. The interval 16 to 133 (LIFVLLPFVL…GSFGWVSNKV (118 aa)) is esterase domain first part. The Virion surface segment spans residues 28–404 (KPITPHYGPG…ENVDVTSSAY (377 aa)). The active-site Nucleophile is the Ser-49. Cys-53 and Cys-69 are disulfide-bonded. 7 N-linked (GlcNAc...) asparagine; by host glycosylation sites follow: Asn-88, Asn-117, Asn-159, Asn-165, Asn-247, Asn-268, and Asn-289. Cystine bridges form between Cys-120-Cys-168, Cys-207-Cys-284, and Cys-215-Cys-257. The receptor binding stretch occupies residues 134–274 (GFYSKLYSMA…GVYNATTFGK (141 aa)). The segment at 275–390 (FLIYPTKSYC…SCPQYYKLFE (116 aa)) is esterase domain second part. A disulfide bridge connects residues Cys-315 and Cys-320. Asn-324 carries an N-linked (GlcNAc...) asparagine; by host glycan. Active-site charge relay system residues include Asp-336 and His-339. Asn-354 is a glycosylation site (N-linked (GlcNAc...) asparagine; by host). Cys-357 and Cys-382 are oxidised to a cystine. Residues 405 to 425 (FVATWVLLVLVIILIFILISF) traverse the membrane as a helical segment. Residues 426 to 430 (CLSSY) are Intravirion-facing.

Belongs to the influenza type C/coronaviruses hemagglutinin-esterase family. N-glycosylated.

The protein resides in the virion membrane. It is found in the host cell membrane. The catalysed reaction is N-acetyl-9-O-acetylneuraminate + H2O = N-acetylneuraminate + acetate + H(+). The enzyme catalyses N-acetyl-4-O-acetylneuraminate + H2O = N-acetylneuraminate + acetate + H(+). Structural protein that makes short spikes at the surface of the virus. Contains receptor binding and receptor-destroying activities. Mediates de-O-acetylation of N-acetyl-9-O-acetylneuraminic acid, which is probably the receptor determinant recognized by the virus on the surface of erythrocytes and susceptible cells. This receptor-destroying activity is important for virus release as it probably helps preventing self-aggregation and ensures the efficient spread of the progeny virus from cell to cell. May serve as a secondary viral attachment protein for initiating infection, the spike protein being the major one. Seems to be a 'luxury' protein that is not absolutely necessary for virus infection in culture. However, its presence in the virus may alter its pathogenicity. May become a target for both the humoral and the cellular branches of the immune system. The polypeptide is Hemagglutinin-esterase (HE) (Porcine torovirus (strain P10) (PoTV)).